The following is a 705-amino-acid chain: Phosphoribosylformylglycinamidine synthase subunit PurL (705 aa).

His32 is an active-site residue. Tyr35 provides a ligand contact to ATP. Glu76 is a Mg(2+) binding site. Substrate-binding positions include 77 to 80 and Arg99; that span reads SHNH. Catalysis depends on His78, which acts as the Proton acceptor. A Mg(2+)-binding site is contributed by Asp100. Gln224 contacts substrate. Asp252 is a binding site for Mg(2+). 296-298 contacts substrate; the sequence is ESQ. 2 residues coordinate ATP: Asp471 and Gly508. Asn509 provides a ligand contact to Mg(2+). Ser511 contributes to the substrate binding site.

It belongs to the FGAMS family. As to quaternary structure, monomer. Part of the FGAM synthase complex composed of 1 PurL, 1 PurQ and 2 PurS subunits.

Its subcellular location is the cytoplasm. The catalysed reaction is N(2)-formyl-N(1)-(5-phospho-beta-D-ribosyl)glycinamide + L-glutamine + ATP + H2O = 2-formamido-N(1)-(5-O-phospho-beta-D-ribosyl)acetamidine + L-glutamate + ADP + phosphate + H(+). It functions in the pathway purine metabolism; IMP biosynthesis via de novo pathway; 5-amino-1-(5-phospho-D-ribosyl)imidazole from N(2)-formyl-N(1)-(5-phospho-D-ribosyl)glycinamide: step 1/2. Part of the phosphoribosylformylglycinamidine synthase complex involved in the purines biosynthetic pathway. Catalyzes the ATP-dependent conversion of formylglycinamide ribonucleotide (FGAR) and glutamine to yield formylglycinamidine ribonucleotide (FGAM) and glutamate. The FGAM synthase complex is composed of three subunits. PurQ produces an ammonia molecule by converting glutamine to glutamate. PurL transfers the ammonia molecule to FGAR to form FGAM in an ATP-dependent manner. PurS interacts with PurQ and PurL and is thought to assist in the transfer of the ammonia molecule from PurQ to PurL. This Pyrococcus abyssi (strain GE5 / Orsay) protein is Phosphoribosylformylglycinamidine synthase subunit PurL.